The primary structure comprises 63 residues: U2-agatoxin-Ao1v (63 aa).

Positions 1 to 14 are cleaved as a signal peptide; the sequence is LLLISAMVGSMIAA. Positions 15–28 are excised as a propeptide; sequence VPEEESLQLSEDER. Intrachain disulfides connect Cys31/Cys47, Cys38/Cys52, and Cys46/Cys62.

Belongs to the neurotoxin 01 (U2-agtx) family. Expressed by the venom gland.

It localises to the secreted. Its function is as follows. Insect active toxin causing rapid but reversible paralysis in crickets. No activity shown in mammals. Does not show effect on mammalian voltage-gated calcium channels. This chain is U2-agatoxin-Ao1v, found in Agelena orientalis (Funnel-web spider).